Consider the following 260-residue polypeptide: UPF0246 protein BamMC406_2140 (260 aa).

Belongs to the UPF0246 family.

The sequence is that of UPF0246 protein BamMC406_2140 from Burkholderia ambifaria (strain MC40-6).